We begin with the raw amino-acid sequence, 849 residues long: ATP-binding cassette sub-family B member 6 (849 aa).

Residues 1-25 (MVRLGSYCEHNGSISQAWLDSGLSP) are Lumenal-facing. Residues 1–195 (MVRLGSYCEH…TLFLFVLGIR (195 aa)) are required for the lysosomal targeting. Positions 1 to 227 (MVRLGSYCEH…SQPLLRDPNQ (227 aa)) are required for ATPase activity. A disulfide bridge links Cys8 with Cys26. Asn11 carries an N-linked (GlcNAc...) asparagine glycan. A helical transmembrane segment spans residues 26 to 46 (CFYFTLVPSVLLSFSFLLGAL). At 47–72 (QSALYARHSTTMEPKYIPRSRLYRLQ) the chain is on the cytoplasmic side. Residues 73–93 (IVLSVVLILQSVIGLIWQAAG) traverse the membrane as a helical segment. The Lumenal portion of the chain corresponds to 94-98 (TDVVY). Residues 99–119 (GYMIVHGCLSVVAWGFSLWLL) form a helical membrane-spanning segment. Topologically, residues 120–136 (HLERTRALVREKSRGHG) are cytoplasmic. Residues 137–157 (VVLLLFWALAFAAENLAFISW) traverse the membrane as a helical segment. Topologically, residues 158–173 (QSPNWWWLSRDTVPQK) are lumenal. The helical transmembrane segment at 174–194 (VQFGLWITRYVCTLFLFVLGI) threads the bilayer. The Cytoplasmic portion of the chain corresponds to 195–254 (RAPGRPRKPYIVLINEDERDVETSQPLLRDPNQSTWQGFKKKLLLVMQYIWPRRNIPLQL). A helical transmembrane segment spans residues 255–275 (LVALCMGLMGLERAINVFVPI). Residues 256-547 (VALCMGLMGL…FGTYYRMIQS (292 aa)) enclose the ABC transmembrane type-1 domain. Residues 276 to 291 (YAKKIVDGLTEDSTWN) are Lumenal-facing. The chain crosses the membrane as a helical span at residues 292 to 312 (ILAVTVCIYVLLKFLQGGGAG). Residues 313–373 (TTGFLSNLRT…VDRGTSSINS (61 aa)) are Cytoplasmic-facing. The helical transmembrane segment at 374-394 (LLSYIVFSILPTIADIVIGIV) threads the bilayer. The Lumenal segment spans residues 395 to 401 (YFTSSFN). Residues 402–422 (AWFGLIIFVCMTLYLTLTIII) form a helical membrane-spanning segment. At 423–492 (TEWRTKYRRE…ASLAMLNQTQ (70 aa)) the chain is on the cytoplasmic side. A helical membrane pass occupies residues 493–513 (NLIIGLGLLAGSLLCAYFVTE). Residues 514–520 (NKFKVGD) are Lumenal-facing. The helical transmembrane segment at 521 to 541 (YVLFGTYIIQLYTPLNWFGTY) threads the bilayer. Residues 542 to 849 (YRMIQSSFID…PPKATPRRGH (308 aa)) are Cytoplasmic-facing. Residues 581-815 (IEFENVHFSY…GGVYAGMWQK (235 aa)) form the ABC transporter domain. ATP is bound by residues Tyr590 and 614–625 (GPSGSGKSTIIR). Low complexity predominate over residues 814 to 825 (QKQQSGSESSSD). The disordered stretch occupies residues 814–849 (QKQQSGSESSSDSDSERKDRTSEKLQPPKATPRRGH). The segment covering 827–836 (DSERKDRTSE) has biased composition (basic and acidic residues).

The protein belongs to the ABC transporter superfamily. ABCB family. Heavy Metal importer (TC 3.A.1.210) subfamily. As to quaternary structure, homodimer. Post-translationally, N-glycosylated.

Its subcellular location is the cell membrane. The protein localises to the mitochondrion outer membrane. It localises to the endoplasmic reticulum membrane. It is found in the golgi apparatus membrane. The protein resides in the endosome membrane. Its subcellular location is the lysosome membrane. The protein localises to the late endosome membrane. It localises to the early endosome membrane. It is found in the secreted. The protein resides in the extracellular exosome. Its subcellular location is the mitochondrion. The protein localises to the endosome. It localises to the multivesicular body membrane. It is found in the melanosome membrane. It carries out the reaction heme b(in) + ATP + H2O = heme b(out) + ADP + phosphate + H(+). The enzyme catalyses coproporphyrin III(in) + ATP + H2O = coproporphyrin III(out) + ADP + phosphate + H(+). The catalysed reaction is pheophorbide a(in) + ATP + H2O = pheophorbide a(out) + ADP + phosphate + H(+). It catalyses the reaction coproporphyrinogen III(in) + ATP + H2O = coproporphyrinogen III(out) + ADP + phosphate + H(+). It carries out the reaction protoporphyrin IX(in) + ATP + H2O = protoporphyrin IX(out) + ADP + phosphate + H(+). The enzyme catalyses coproporphyrin I(in) + ATP + H2O = coproporphyrin I(out) + ADP + phosphate + H(+). The catalysed reaction is uroporphyrin I(in) + ATP + H2O = uroporphyrin I(out) + ADP + phosphate + H(+). It catalyses the reaction uroporphyrin III(in) + ATP + H2O = uroporphyrin III(out) + ADP + phosphate + H(+). Its function is as follows. ATP-dependent transporter that catalyzes the transport of a broad-spectrum of porphyrins from the cytoplasm to the extracellular space through the plasma membrane or into the vesicle lumen. May also function as an ATP-dependent importer of porphyrins from the cytoplasm into the mitochondria, in turn may participate in the de novo heme biosynthesis regulation and in the coordination of heme and iron homeostasis during phenylhydrazine stress. May also play a key role in the early steps of melanogenesis producing PMEL amyloid fibrils. In vitro, it confers to cells a resistance to toxic metal such as arsenic and cadmium and against chemotherapeutics agent such as 5-fluorouracil, SN-38 and vincristin. In addition may play a role in the transition metal homeostasis. This Xenopus tropicalis (Western clawed frog) protein is ATP-binding cassette sub-family B member 6 (abcb6).